A 176-amino-acid polypeptide reads, in one-letter code: Retinol-binding protein 4-B (176 aa).

N-acetylserine is present on Ser-1. 3 cysteine pairs are disulfide-bonded: Cys-3–Cys-159, Cys-69–Cys-173, and Cys-119–Cys-128. Residue Gln-97 coordinates substrate.

It belongs to the calycin superfamily. Lipocalin family.

It is found in the secreted. RBP delivers retinol from the liver stores to the peripheral tissues. In plasma, the RBP-retinol complex interacts with transthyretin, this prevents its loss by filtration through the kidney glomeruli. The sequence is that of Retinol-binding protein 4-B (rbp4b) from Oncorhynchus mykiss (Rainbow trout).